Reading from the N-terminus, the 202-residue chain is Putative pituitary tumor-transforming gene 3 protein (202 aa).

Residues 61–64 carry the D-box motif; that stretch reads RKAL. The tract at residues 67 to 92 is disordered; the sequence is VNRATEKSVKTNGPLKQKQPSFSAKK. Positions 163-173 match the SH3-binding motif; it reads PPLPLKMPSPP.

Belongs to the securin family.

The protein resides in the cytoplasm. Its subcellular location is the nucleus. This is Putative pituitary tumor-transforming gene 3 protein (PTTG3) from Pongo pygmaeus (Bornean orangutan).